A 415-amino-acid polypeptide reads, in one-letter code: DNA polymerase IV (415 aa).

Positions 15–196 constitute a UmuC domain; sequence ILHVDMNCFF…LSVEAMHGIG (182 aa). Residues D19 and D115 each coordinate Mg(2+). The active site involves E116. The span at 235–246 shows a compositional bias: basic and acidic residues; it reads KRAKGTDDREVD. Positions 235-260 are disordered; sequence KRAKGTDDREVDPSQMGQHKSVGNSM. The span at 249 to 260 shows a compositional bias: polar residues; it reads QMGQHKSVGNSM.

It belongs to the DNA polymerase type-Y family. Monomer. The cofactor is Mg(2+).

It localises to the cytoplasm. It catalyses the reaction DNA(n) + a 2'-deoxyribonucleoside 5'-triphosphate = DNA(n+1) + diphosphate. Poorly processive, error-prone DNA polymerase involved in untargeted mutagenesis. Copies undamaged DNA at stalled replication forks, which arise in vivo from mismatched or misaligned primer ends. These misaligned primers can be extended by PolIV. Exhibits no 3'-5' exonuclease (proofreading) activity. May be involved in translesional synthesis, in conjunction with the beta clamp from PolIII. In Bacillus cereus (strain ATCC 14579 / DSM 31 / CCUG 7414 / JCM 2152 / NBRC 15305 / NCIMB 9373 / NCTC 2599 / NRRL B-3711), this protein is DNA polymerase IV.